Consider the following 156-residue polypeptide: ATP synthase subunit b (156 aa).

A helical membrane pass occupies residues 5–27 (ITLIGQMITFAIFVGFTMKFVWP).

The protein belongs to the ATPase B chain family. In terms of assembly, F-type ATPases have 2 components, F(1) - the catalytic core - and F(0) - the membrane proton channel. F(1) has five subunits: alpha(3), beta(3), gamma(1), delta(1), epsilon(1). F(0) has three main subunits: a(1), b(2) and c(10-14). The alpha and beta chains form an alternating ring which encloses part of the gamma chain. F(1) is attached to F(0) by a central stalk formed by the gamma and epsilon chains, while a peripheral stalk is formed by the delta and b chains.

It is found in the cell inner membrane. In terms of biological role, f(1)F(0) ATP synthase produces ATP from ADP in the presence of a proton or sodium gradient. F-type ATPases consist of two structural domains, F(1) containing the extramembraneous catalytic core and F(0) containing the membrane proton channel, linked together by a central stalk and a peripheral stalk. During catalysis, ATP synthesis in the catalytic domain of F(1) is coupled via a rotary mechanism of the central stalk subunits to proton translocation. Component of the F(0) channel, it forms part of the peripheral stalk, linking F(1) to F(0). The sequence is that of ATP synthase subunit b from Francisella tularensis subsp. tularensis (strain SCHU S4 / Schu 4).